We begin with the raw amino-acid sequence, 71 residues long: Protein SlyX homolog (71 aa).

The disordered stretch occupies residues 52-71 (RLDQAESSAGAPANERPPHY).

The protein belongs to the SlyX family.

This is Protein SlyX homolog from Rhodopseudomonas palustris (strain ATCC BAA-98 / CGA009).